Here is a 348-residue protein sequence, read N- to C-terminus: Heat-inducible transcription repressor HrcA (348 aa).

The protein belongs to the HrcA family.

Negative regulator of class I heat shock genes (grpE-dnaK-dnaJ and groELS operons). Prevents heat-shock induction of these operons. The polypeptide is Heat-inducible transcription repressor HrcA (Lacticaseibacillus casei (strain BL23) (Lactobacillus casei)).